Reading from the N-terminus, the 224-residue chain is Pyridoxal 5'-phosphate synthase subunit SNO1 (224 aa).

67–69 (GES) serves as a coordination point for L-glutamine. Residue cysteine 100 is the Nucleophile of the active site. L-glutamine-binding positions include arginine 129 and 160-161 (IR). Active-site charge relay system residues include histidine 203 and glutamate 205.

Belongs to the glutaminase PdxT/SNO family.

It catalyses the reaction aldehydo-D-ribose 5-phosphate + D-glyceraldehyde 3-phosphate + L-glutamine = pyridoxal 5'-phosphate + L-glutamate + phosphate + 3 H2O + H(+). The catalysed reaction is L-glutamine + H2O = L-glutamate + NH4(+). The protein operates within cofactor biosynthesis; pyridoxal 5'-phosphate biosynthesis. Catalyzes the hydrolysis of glutamine to glutamate and ammonia as part of the biosynthesis of pyridoxal 5'-phosphate. The resulting ammonia molecule is channeled to the active site of a SNZ isoform. The chain is Pyridoxal 5'-phosphate synthase subunit SNO1 (SNO1) from Saccharomyces cerevisiae (strain ATCC 204508 / S288c) (Baker's yeast).